The sequence spans 556 residues: Aplysianin-A (556 aa).

The N-terminal stretch at 1 to 19 (MAVRFLALGLLIFVTSCSG) is a signal peptide. N-linked (GlcNAc...) asparagine glycans are attached at residues Asn150, Asn177, Asn374, Asn399, Asn414, and Asn430.

The protein to A.fulica achacin protein. Homotetramer. In terms of tissue distribution, albumen gland.

Has antibacterial activity against Gram-negative and Gram-positive bacteria. The protein is Aplysianin-A of Aplysia kurodai (Kuroda's sea hare).